The primary structure comprises 585 residues: MLGRTLINKHGFLIHPRRFVHLNDKSLDGTFILPSKKNHMYDVPTNDLSGILNASDIDRINNLPFFDNTSPTKETNTKEGALLSEKLASVKELFGEDLENPSFINYRFPRGLENPYFDIQVNQLKKKRLSVTQLCTTQNWCELRNFYDFYSQNLSNQLLNLKFQVQKGKKIHKSLEDETHPELNQYKSFTHNFLALTKLSMDIDNDMDALLDNWFNSINRLVSLFTKGDGHAREIVCHGFINLEDGKLVEHLLNSDSKTKENVIISGVIDHLTLRNKHNHQVQKGAAHLDTEYQSWGNILTNLLSNLKELKSNNEIVISDIKTRSVPKIPSIESVIESSKLQTMYYKFFFSHLSQDMTQTYHSFLINAKRRGLDVDAPINPTKILTFILTNPLFANDVKNLLYGLPINHSAFDNDAKGSNTFDMAAFNDLLDRGPTSFNVPIEQDEDSSESTKCVSLRDYGHFYTKWKTPLTLKYFAARLSQIYFIVGNLVSNDLMIEYYYHNDNFHNIIFPYDTLKLGTHAHDSAMVWFGGRDMHPIEPTQKNFNTYCKFCDYRHVCSWKNKNELKLIDLGKELKKIILESSMK.

Residues 1–26 constitute a mitochondrion transit peptide; the sequence is MLGRTLINKHGFLIHPRRFVHLNDKS. [4Fe-4S] cluster is bound by residues Cys-141, Cys-549, Cys-552, and Cys-558.

It belongs to the EXO5 family. In terms of assembly, monomer. Mg(2+) serves as cofactor. The cofactor is [4Fe-4S] cluster.

It is found in the mitochondrion. In terms of biological role, single strand DNA specific 5' exonuclease involved in mitochondrial DNA replication and recombination. Releases dinucleotides as main products of catalysis. Has the capacity to slide across 5'double-stranded DNA or 5'RNA sequences and resumes cutting two nucleotides downstream of the double-stranded-to-single-stranded junction or RNA-to-DNA junction, respectively. The protein is Exonuclease V, mitochondrial (EXO5) of Saccharomyces cerevisiae (strain Lalvin EC1118 / Prise de mousse) (Baker's yeast).